Consider the following 545-residue polypeptide: Autoimmune regulator (545 aa).

In terms of domain architecture, HSR spans 1-105 (MATDAALRRL…ILDSFPKDVD (105 aa)). 2 consecutive short sequence motifs (LXXLL motif) follow at residues 7–11 (LRRLL) and 63–67 (LSWLL). Disordered stretches follow at residues 101–178 (PKDV…LPLG) and 234–290 (SKFE…SDPQ). A compositionally biased stretch (pro residues) spans 116-128 (PAVPKALVPPPRL). A compositionally biased stretch (low complexity) spans 140 to 152 (AAAPAALTPRGTA). The 100-residue stretch at 181-280 (IQTMSASVQR…ARLGQQGSVP (100 aa)) folds into the SAND domain. 3 interaction with histone H3 not methylated at 'Lys-4' regions span residues 295–298 (NEDE), 304–312 (DGGELICCD), and 331–335 (PSGTW). The segment at 296–343 (EDECAVCRDGGELICCDGCPRAFHLACLSPPLREIPSGTWRCSSCLQA) adopts a PHD-type 1 zinc-finger fold. The disordered stretch occupies residues 348-382 (VQPRAEEPRPQEPPVETPLPPGLRSAGEEVRGPPG). Over residues 358–368 (QEPPVETPLPP) the composition is skewed to pro residues. An LXXLL motif 3 motif is present at residues 414–418 (LHPLL). The segment at 434 to 475 (CGVCGDGTDVLRCTHCAAAFHWRCHFPAGTSRPGTGLRCRSC) adopts a PHD-type 2 zinc-finger fold. The segment at 489–508 (APSPARLAPGPAKDDTASHE) is disordered. The short motif at 516-520 (LESLL) is the LXXLL motif 4 element.

As to quaternary structure, homodimer and homotetramer. Interacts with CREBBP. Interacts preferentially with histone H3 that is not methylated at 'Lys-4'. Binds with lower affinity to histone H3 that is monomethylated at 'Lys-4'. Trimethylation of histone H3 at 'Lys-4' or phosphorylation at 'Thr-3' abolish the interaction. Binds with lower affinity to histone H3 that is acetylated at 'Lys-4', or that is acetylated at 'Lys-9' or trimethylated at 'Lys-9'. Binds histone H3 that is dimethylated at 'Arg-2' with very low affinity. Post-translationally, phosphorylated. Phosphorylation could trigger oligomerization. In terms of tissue distribution, widely expressed. Expressed at higher level in thymus (medullary epithelial cells and monocyte-dendritic cells), pancreas, adrenal cortex and testis. Expressed at lower level in the spleen, fetal liver and lymph nodes. In secondary lymphoid organs, expressed in a discrete population of bone marrow-derived toleregenic antigen presenting cells (APCs) called extrathymic AIRE expressing cells (eTAC)(at protein level). Isoform 2 and isoform 3 seem to be less frequently expressed than isoform 1, if at all.

Its subcellular location is the nucleus. The protein localises to the cytoplasm. Its function is as follows. Transcription factor playing an essential role to promote self-tolerance in the thymus by regulating the expression of a wide array of self-antigens that have the commonality of being tissue-restricted in their expression pattern in the periphery, called tissue restricted antigens (TRA). Binds to G-doublets in an A/T-rich environment; the preferred motif is a tandem repeat of 5'-ATTGGTTA-3' combined with a 5'-TTATTA-3' box. Binds to nucleosomes. Binds to chromatin and interacts selectively with histone H3 that is not methylated at 'Lys-4', not phosphorylated at 'Thr-3' and not methylated at 'Arg-2'. Functions as a sensor of histone H3 modifications that are important for the epigenetic regulation of gene expression. Mainly expressed by medullary thymic epithelial cells (mTECs), induces the expression of thousands of tissue-restricted proteins, which are presented on major histocompatibility complex class I (MHC-I) and MHC-II molecules to developing T-cells percolating through the thymic medulla. Also induces self-tolerance through other mechanisms such as the regulation of the mTEC differentiation program. Controls the medullary accumulation of thymic dendritic cells and the development of regulatory T-cell through the regulation of XCL1 expression. Regulates the production of CCR4 and CCR7 ligands in medullary thymic epithelial cells and alters the coordinated maturation and migration of thymocytes. In thimic B-cells, allows the presentation of licensing-dependent endogenous self-anitgen for negative selection. In secondary lymphoid organs, induces functional inactivation of CD4(+) T-cells. Expressed by a distinct bone marrow-derived population, induces self-tolerance through a mechanism that does not require regulatory T-cells and is resitant to innate inflammatory stimuli. The polypeptide is Autoimmune regulator (AIRE) (Homo sapiens (Human)).